Consider the following 601-residue polypeptide: Pyranose 2-oxidase (601 aa).

Position 151 is a tele-8alpha-FAD histidine (H151). Substrate is bound by residues Q406 and H408. H505 (proton acceptor) is an active-site residue. The active site involves N558. Residues K577–A601 form a disordered region. The segment covering G591 to A601 has biased composition (acidic residues).

This sequence belongs to the GMC oxidoreductase family. In terms of assembly, homotetramer. FAD is required as a cofactor.

The enzyme catalyses D-glucose + O2 = 2-dehydro-D-glucose + H2O2. Catalyzes the oxidation of various aldopyranoses and disaccharides on carbon-2 to the corresponding 2-keto sugars concomitant with the reduction of O(2) to H(2)O(2). This is Pyranose 2-oxidase (p2ox) from Emericella nidulans (strain FGSC A4 / ATCC 38163 / CBS 112.46 / NRRL 194 / M139) (Aspergillus nidulans).